The chain runs to 412 residues: Putative pectate lyase 11 (412 aa).

The signal sequence occupies residues 1–24 (MVSYSNNHFAYAFLLLLTIGNTLA). Positions 210, 234, and 238 each coordinate Ca(2+). The active site involves Arg290.

It belongs to the polysaccharide lyase 1 family. Ca(2+) is required as a cofactor.

The enzyme catalyses Eliminative cleavage of (1-&gt;4)-alpha-D-galacturonan to give oligosaccharides with 4-deoxy-alpha-D-galact-4-enuronosyl groups at their non-reducing ends.. Its pathway is glycan metabolism; pectin degradation; 2-dehydro-3-deoxy-D-gluconate from pectin: step 2/5. The chain is Putative pectate lyase 11 from Arabidopsis thaliana (Mouse-ear cress).